The primary structure comprises 216 residues: NKG2-D type II integral membrane protein (216 aa).

Residues 1-51 lie on the Cytoplasmic side of the membrane; sequence MGWIRGRRSRHSWEMSEFHNYNLDLKKSDFSTRWQKQRCPVVKSKCRENAS. The helical; Signal-anchor for type II membrane protein transmembrane segment at 52-72 threads the bilayer; that stretch reads PFFFCCFIAVAMGIRFIIMVT. Topologically, residues 73–216 are extracellular; sequence IWSAVFLNSL…NTYICMQRTV (144 aa). 2 disulfide bridges follow: Cys96/Cys105 and Cys99/Cys110. Residues 98 to 213 enclose the C-type lectin domain; sequence PCPKNWICYK…STPNTYICMQ (116 aa). Residues Asn115, Asn131, Asn163, and Asn202 are each glycosylated (N-linked (GlcNAc...) asparagine). 2 cysteine pairs are disulfide-bonded: Cys127-Cys211 and Cys189-Cys203.

As to quaternary structure, homodimer; disulfide-linked. Heterohexamer composed of two subunits of KLRK1 and four subunits of HCST/DAP10. Interacts (via transmembrane domain) with HCST/DAP10 (via transmembrane domain); the interaction is required for KLRK1 NK cell surface and induces NK cell-mediated cytotoxicity. Can form disulfide-bonded heterodimer with CD94. Interacts with CEACAM1; recruits PTPN6 that dephosphorylates VAV1. Natural killer cells.

The protein resides in the cell membrane. Functionally, functions as an activating and costimulatory receptor involved in immunosurveillance upon binding to various cellular stress-inducible ligands displayed at the surface of autologous tumor cells and virus-infected cells. Provides both stimulatory and costimulatory innate immune responses on activated killer (NK) cells, leading to cytotoxic activity. Acts as a costimulatory receptor for T-cell receptor (TCR) in CD8(+) T-cell-mediated adaptive immune responses by amplifying T-cell activation. Stimulates perforin-mediated elimination of ligand-expressing tumor cells. Signaling involves calcium influx, culminating in the expression of TNF-alpha. Participates in NK cell-mediated bone marrow graft rejection. May play a regulatory role in differentiation and survival of NK cells. Binds to ligands belonging to various subfamilies of MHC class I-related glycoproteins. This Pan troglodytes (Chimpanzee) protein is NKG2-D type II integral membrane protein (KLRK1).